Reading from the N-terminus, the 591-residue chain is Protein kinase C zeta type (591 aa).

The PB1 domain occupies 15–98; that stretch reads RVRLKAHYSG…DGLILHVFPS (84 aa). Residues 79-145 form an interaction with SQSTM1 region; the sequence is AFRLAGQHRD…KRFNRRAYCG (67 aa). Residues 130-180 form a Phorbol-ester/DAG-type zinc finger; it reads GHLFQAKRFNRRAYCGQCSERIWGLARQGYRCINCKLLVHKRCHGLVPLTC. The Protein kinase domain occupies 251–517; that stretch reads FDLIRVIGRG…FSDIKSHAFF (267 aa). Residues 257-265 and Lys280 each bind ATP; that span reads IGRGSYAKV. Asp375 acts as the Proton acceptor in catalysis. Thr409 carries the post-translational modification Phosphothreonine; by PDPK1 and PI3K. An AGC-kinase C-terminal domain is found at 518–589; the sequence is RSIDWDLLEK…INPLLLSTEE (72 aa). Thr559 carries the post-translational modification Phosphothreonine. Ser590 bears the Phosphoserine mark.

This sequence belongs to the protein kinase superfamily. AGC Ser/Thr protein kinase family. PKC subfamily. As to quaternary structure, interacts with PARD6A, PARD6B and PARD6G. Part of a complex with PARD3, PARD6A or PARD6B or PARD6G and CDC42 or RAC1. Interacts with ADAP1/CENTA1. Interacts directly with SQSTM1. Forms a ternary complex with SQSTM1 and KCNAB2. Forms another ternary complex with SQSTM1 and GABRR3. Forms a complex with SQSTM1 and MAP2K5. Interacts (via the protein kinase domain) with WWC1. Forms a tripartite complex with WWC1 and DDR1, but predominantly in the absence of collagen. Component of the Par polarity complex, composed of at least phosphorylated PRKCZ, PARD3 and TIAM1. Interacts with PDPK1 (via N-terminal region). Interacts with WDFY2 (via WD repeats 1-3). Interacts with VAMP2. Forms a complex with WDFY2 and VAMP2. Interacts with APPL1. Interacts with WWC1, WWC2 and WWC3. In terms of processing, CDH5 is required for its phosphorylation at Thr-409. Phosphorylated by protein kinase PDPK1; phosphorylation is inhibited by the apoptotic C-terminal cleavage product of PKN2. Phosphorylation at Thr-409 by PI3K activates the kinase.

It localises to the cytoplasm. The protein resides in the endosome. It is found in the cell junction. Its subcellular location is the membrane. The enzyme catalyses L-seryl-[protein] + ATP = O-phospho-L-seryl-[protein] + ADP + H(+). It carries out the reaction L-threonyl-[protein] + ATP = O-phospho-L-threonyl-[protein] + ADP + H(+). With respect to regulation, atypical PKCs (PRKCI and PRKCZ) exhibit an elevated basal enzymatic activity (that may be due to the interaction with SMG1 or SQSTM1) and are not regulated by diacylglycerol, phosphatidylserine, phorbol esters or calcium ions. Two specific sites, Thr-409 (activation loop of the kinase domain) and Thr-559 (turn motif), need to be phosphorylated for its full activation. Phosphatidylinositol 3,4,5-trisphosphate might be a physiological activator. Functionally, calcium- and diacylglycerol-independent serine/threonine-protein kinase that functions in phosphatidylinositol 3-kinase (PI3K) pathway and mitogen-activated protein (MAP) kinase cascade, and is involved in NF-kappa-B activation, mitogenic signaling, cell proliferation, cell polarity, inflammatory response and maintenance of long-term potentiation (LTP). Upon lipopolysaccharide (LPS) treatment in macrophages, or following mitogenic stimuli, functions downstream of PI3K to activate MAP2K1/MEK1-MAPK1/ERK2 signaling cascade independently of RAF1 activation. Required for insulin-dependent activation of AKT3, but may function as an adapter rather than a direct activator. Upon insulin treatment may act as a downstream effector of PI3K and contribute to the activation of translocation of the glucose transporter SLC2A4/GLUT4 and subsequent glucose transport in adipocytes. In EGF-induced cells, binds and activates MAP2K5/MEK5-MAPK7/ERK5 independently of its kinase activity and can activate JUN promoter through MEF2C. Through binding with SQSTM1/p62, functions in interleukin-1 signaling and activation of NF-kappa-B with the specific adapters RIPK1 and TRAF6. Participates in TNF-dependent transactivation of NF-kappa-B by phosphorylating and activating IKBKB kinase, which in turn leads to the degradation of NF-kappa-B inhibitors. In migrating astrocytes, forms a cytoplasmic complex with PARD6A and is recruited by CDC42 to function in the establishment of cell polarity along with the microtubule motor and dynein. In association with FEZ1, stimulates neuronal differentiation in PC12 cells. In the inflammatory response, is required for the T-helper 2 (Th2) differentiation process, including interleukin production, efficient activation of JAK1 and the subsequent phosphorylation and nuclear translocation of STAT6. May be involved in development of allergic airway inflammation (asthma), a process dependent on Th2 immune response. In the NF-kappa-B-mediated inflammatory response, can relieve SETD6-dependent repression of NF-kappa-B target genes by phosphorylating the RELA subunit at 'Ser-311'. Phosphorylates VAMP2 in vitro. Phosphorylates and activates LRRK1, which phosphorylates RAB proteins involved in intracellular trafficking. The chain is Protein kinase C zeta type (PRKCZ) from Oryctolagus cuniculus (Rabbit).